Consider the following 702-residue polypeptide: Nucleolar and coiled-body phosphoprotein 1 (702 aa).

The region spanning 10–42 (VPSDLYPLVLRFLRDSQLSEVASKFAKATGATQ) is the LisH domain. Position 33 is an N6-acetyllysine (lysine 33). The tract at residues 65 to 635 (PKVKLQSNGP…SPFRRVREEE (571 aa)) is disordered. Residues lysine 68 and lysine 77 each participate in a glycyl lysine isopeptide (Lys-Gly) (interchain with G-Cter in SUMO2) cross-link. 2 Acidic serine cluster repeats span residues 85–96 (SSDSSEDSSEDE) and 130–141 (ESSSSEESSEEE). An 11 X 12 AA approximate repeats of an acidic serine cluster region spans residues 85–566 (SSDSSEDSSE…GKAAKESEEE (482 aa)). Serine 88 is subject to Phosphoserine. Diphosphoserine occurs at positions 89 and 92. Residues serine 89 and serine 92 each carry the phosphoserine; by CK2 modification. A Phosphoserine modification is found at serine 93. 2 stretches are compositionally biased toward low complexity: residues 123-135 (KAAAKASESSSSE) and 151-164 (QQKAAKPQAKAVRP). Residues 172–188 (SESDSDSDSDSSSEEET) show a composition bias toward acidic residues. The Acidic serine cluster 3 repeat unit spans residues 176–187 (SDSDSDSSSEEE). 4 stretches are compositionally biased toward low complexity: residues 189–205 (PQTQKPKAAVAAKAQTK), 224–235 (KAAASSSSSSSS), 245–278 (AAPPKKTVPKKQVVAKAPVKVAAAPTQKSSSSED), and 308–329 (LPKKSPGTQAPKKAAAQTQPAD). Glycyl lysine isopeptide (Lys-Gly) (interchain with G-Cter in SUMO2) cross-links involve residues lysine 195 and lysine 201. An interaction with RPA194 region spans residues 215 to 390 (KAQPKVANGK…EDEAPAKPVS (176 aa)). 2 Acidic serine cluster repeats span residues 232–241 (SSSSDDSEEE) and 273–284 (SSSSEDSSSEEE). Acidic residues predominate over residues 330–342 (SSDDSSDDSDSSS). One copy of the Acidic serine cluster 6 repeat lies at 334 to 345 (SSDDSDSSSEEE). Glycyl lysine isopeptide (Lys-Gly) (interchain with G-Cter in SUMO2) cross-links involve residues lysine 351 and lysine 356. Over residues 353–362 (VVSKTPAKAA) the composition is skewed to low complexity. Serine 371, serine 372, and serine 375 each carry phosphoserine. Residues 372–383 (SDSSDSDSSEDE) form an Acidic serine cluster 7 repeat. Glycyl lysine isopeptide (Lys-Gly) (interchain with G-Cter in SUMO2) cross-links involve residues lysine 396, lysine 402, lysine 407, and lysine 413. The segment covering 411-422 (TPKQPAGSNQKP) has biased composition (polar residues). Residue lysine 421 is modified to N6-acetyllysine; alternate. Lysine 421 is covalently cross-linked (Glycyl lysine isopeptide (Lys-Gly) (interchain with G-Cter in SUMO1); alternate). A Glycyl lysine isopeptide (Lys-Gly) (interchain with G-Cter in SUMO2); alternate cross-link involves residue lysine 421. The stretch at 431-442 (SSEEESSSSEEE) is one Acidic serine cluster 8 repeat. Residues 431 to 443 (SSEEESSSSEEEE) show a composition bias toward acidic residues. Residues lysine 447 and lysine 459 each participate in a glycyl lysine isopeptide (Lys-Gly) (interchain with G-Cter in SUMO2) cross-link. 2 stretches are compositionally biased toward low complexity: residues 447–480 (KSATTPKAKVTAKAAPAKQAPQAAGDSSSDSDSS) and 514–525 (KSSSSSSSSSSE). Acidic serine cluster repeat units follow at residues 474-484 (SSDSDSSSSEE) and 521-531 (SSSSEDSSEEE). Polar residues predominate over residues 541-554 (PKIQASKANGTPAS). One copy of the Acidic serine cluster 11 repeat lies at 555 to 566 (LNGKAAKESEEE). Serine 563 carries the phosphoserine modification. A compositionally biased stretch (acidic residues) spans 563-572 (SEEEEEEEET). Lysine 575 participates in a covalent cross-link: Glycyl lysine isopeptide (Lys-Gly) (interchain with G-Cter in SUMO1). Residue lysine 582 forms a Glycyl lysine isopeptide (Lys-Gly) (interchain with G-Cter in SUMO2) linkage. Serine 585 carries the post-translational modification Phosphoserine. Phosphothreonine is present on threonine 594. A Glycyl lysine isopeptide (Lys-Gly) (interchain with G-Cter in SUMO2) cross-link involves residue lysine 607. Residues threonine 610 and threonine 613 each carry the phosphothreonine modification. Lysine 616 participates in a covalent cross-link: Glycyl lysine isopeptide (Lys-Gly) (interchain with G-Cter in SUMO2). Serine 625 and serine 646 each carry phosphoserine. Lysine 650 participates in a covalent cross-link: Glycyl lysine isopeptide (Lys-Gly) (interchain with G-Cter in SUMO2). Lysine 666 is modified (N6-acetyllysine; alternate). Residue lysine 666 forms a Glycyl lysine isopeptide (Lys-Gly) (interchain with G-Cter in SUMO2); alternate linkage. Arginine 686 bears the Omega-N-methylarginine mark. At serine 689 the chain carries Phosphoserine. Lysine 698 participates in a covalent cross-link: Glycyl lysine isopeptide (Lys-Gly) (interchain with G-Cter in SUMO2). The residue at position 701 (serine 701) is a Phosphoserine.

Belongs to the NOLC1 family. Interacts with RNA polymerase I 194 kDa subunit (RPA194) and with casein kinase-II. Interacts with DKC1/NAP57, NOP58 and fibrillarin. Undergoes rapid and massive phosphorylation/dephosphorylation cycles on CK2 and PKC sites. NOLC1 is one of the mostly phosphorylated proteins in the cell. Post-translationally, pyrophosphorylated by 5-diphosphoinositol pentakisphosphate (5-IP7). Serine pyrophosphorylation is achieved by Mg(2+)-dependent, but enzyme independent transfer of a beta-phosphate from a inositol pyrophosphate to a pre-phosphorylated serine residue. In terms of processing, ubiquitinated. Monoubiquitination by the BCR(KBTBD8) complex promotes the formation of a NOLC1-TCOF1 complex that acts as a platform to connect RNA polymerase I with enzymes responsible for ribosomal processing and modification, leading to remodel the translational program of differentiating cells in favor of neural crest specification.

The protein resides in the nucleus. It is found in the nucleolus. It localises to the cytoplasm. Its function is as follows. Nucleolar protein that acts as a regulator of RNA polymerase I by connecting RNA polymerase I with enzymes responsible for ribosomal processing and modification. Required for neural crest specification: following monoubiquitination by the BCR(KBTBD8) complex, associates with TCOF1 and acts as a platform to connect RNA polymerase I with enzymes responsible for ribosomal processing and modification, leading to remodel the translational program of differentiating cells in favor of neural crest specification. Involved in nucleologenesis, possibly by playing a role in the maintenance of the fundamental structure of the fibrillar center and dense fibrillar component in the nucleolus. It has intrinsic GTPase and ATPase activities. This is Nucleolar and coiled-body phosphoprotein 1 from Mus musculus (Mouse).